The sequence spans 3210 residues: PF 1022-synthetase (3210 aa).

Residues 68 to 454 (VDDRRHAIGH…VKELDVVTAE (387 aa)) are condensation 1. The segment at 483–876 (AGDPNKAAVF…GRKDSQVKIR (394 aa)) is adenylation 1. The Carrier 1 domain occupies 1010–1086 (APATGIEVKL…GLVDVIGRDP (77 aa)). Position 1047 is an O-(pantetheine 4'-phosphoryl)serine (Ser1047). The interval 1104 to 1534 (SFAQGRLWFL…RTPIAVLPLT (431 aa)) is condensation 2. An adenylation 2 region spans residues 1563–2023 (FRKQVAAHPH…GRMDQQVKIR (461 aa)). Positions 2081–2236 (EGWKDFFESN…YLLEVVESLV (156 aa)) are S-adenosyl-L-methionine-dependent N-methyltransferase. 2 consecutive Carrier domains span residues 2570 to 2644 (DPFV…RQGL) and 2668 to 2742 (TPSD…RLTQ). 2 positions are modified to O-(pantetheine 4'-phosphoryl)serine: Ser2604 and Ser2702. A condensation 3 region spans residues 2788–3203 (LDVYPATQMQ…KRMLEELCGN (416 aa)). The disordered stretch occupies residues 2976-3002 (VIKGNNNTTPPPPPQQQSTPSGAHHAS).

It belongs to the NRP synthetase family. Pantetheine 4'-phosphate serves as cofactor.

It catalyses the reaction 2 (R)-3-phenyllactate + 2 (R)-lactate + 4 L-leucine + 4 S-adenosyl-L-methionine + 8 ATP = PF1022A + 8 AMP + 4 S-adenosyl-L-homocysteine + 8 diphosphate + 8 H(+). It carries out the reaction 4 (R)-3-phenyllactate + 4 L-leucine + 4 S-adenosyl-L-methionine + 8 ATP = PF1022B + 8 AMP + 4 S-adenosyl-L-homocysteine + 8 diphosphate + 8 H(+). The enzyme catalyses 3 (R)-3-phenyllactate + (R)-lactate + 4 L-leucine + 4 S-adenosyl-L-methionine + 8 ATP = PF1022C + 8 AMP + 4 S-adenosyl-L-homocysteine + 8 diphosphate + 8 H(+). The catalysed reaction is (R)-3-phenyllactate + 3 (R)-lactate + 4 L-leucine + 4 S-adenosyl-L-methionine + 8 ATP = PF1022D + 8 AMP + 4 S-adenosyl-L-homocysteine + 8 diphosphate + 8 H(+). It catalyses the reaction 4 (R)-lactate + 4 L-leucine + 4 S-adenosyl-L-methionine + 8 ATP = PF1022F + 8 AMP + 4 S-adenosyl-L-homocysteine + 8 diphosphate + 8 H(+). Nonribosomal peptide synthetase that synthesizes cyclooctadepsipeptides (CODPs) PF 1022 that show powerful broad-spectrum anthelmintic activity with low toxicity in animals. Couples 4 N-methyl-L-leucines and a varying content of alpha-D-hydroxy acids (D-lactates or D-phenyllactates) in an alternative fashion. The enzyme is capable of synthesizing all known natural cyclooctadepsipeptides of the PF1022 type differing in the content of D-lactate and D-phenyllactate, using from 4 D-lactates (PF 1022F) to 4 D-phenyllactates (PF 1022B), respectively. The formation of different PF-related compounds is mainly controlled by the molar ratio of the hydroxy acids. N-methylation of the substrate L-leucine takes place after covalent binding prior to peptide bond formation. In Rosellinia sp. (Mycelia sterilia), this protein is PF 1022-synthetase.